A 437-amino-acid chain; its full sequence is Histidinol dehydrogenase (437 aa).

Residues Y137, Q199, and N222 each coordinate NAD(+). 3 residues coordinate substrate: S245, Q267, and H270. 2 residues coordinate Zn(2+): Q267 and H270. Residues E335 and H336 each act as proton acceptor in the active site. H336, D369, E423, and H428 together coordinate substrate. Residue D369 participates in Zn(2+) binding. Residue H428 coordinates Zn(2+).

Belongs to the histidinol dehydrogenase family. The cofactor is Zn(2+).

The enzyme catalyses L-histidinol + 2 NAD(+) + H2O = L-histidine + 2 NADH + 3 H(+). Its pathway is amino-acid biosynthesis; L-histidine biosynthesis; L-histidine from 5-phospho-alpha-D-ribose 1-diphosphate: step 9/9. Functionally, catalyzes the sequential NAD-dependent oxidations of L-histidinol to L-histidinaldehyde and then to L-histidine. This Parasynechococcus marenigrum (strain WH8102) protein is Histidinol dehydrogenase.